A 157-amino-acid polypeptide reads, in one-letter code: Ubiquitin-like protein 4A (157 aa).

The Ubiquitin-like domain occupies 1-76 (MQLTVKALQG…LNLVVKPLEK (76 aa)). Residue Lys-48 forms a Glycyl lysine isopeptide (Lys-Gly) (interchain with G-Cter in ubiquitin) linkage. At Ser-90 the chain carries Phosphoserine. The required and sufficient for interaction with BAG6 stretch occupies residues 96 to 138 (WQLISKVLARHFSAADASRVLEQLQRDYERSLSRLTLDDIERL).

Component of the BAG6/BAT3 complex, at least composed of BAG6, UBL4A and GET4/TRC35. Interacts with BAG6; the interaction is direct and required for UBL4A protein stability. Interacts with USP13; may be indirect via BAG6. In terms of processing, polyubiquitinated. Ubiquitination by AMFR and deubiquitination by USP13 may regulate the interaction between the BAG6/BAT3 complex and SGTA and therefore may regulate client proteins fate.

It localises to the cytoplasm. Its subcellular location is the cytosol. It is found in the nucleus. Functionally, as part of a cytosolic protein quality control complex, the BAG6/BAT3 complex, maintains misfolded and hydrophobic patches-containing proteins in a soluble state and participates in their proper delivery to the endoplasmic reticulum or alternatively can promote their sorting to the proteasome where they undergo degradation. The BAG6/BAT3 complex is involved in the post-translational delivery of tail-anchored/type II transmembrane proteins to the endoplasmic reticulum membrane. Recruited to ribosomes, it interacts with the transmembrane region of newly synthesized tail-anchored proteins and together with SGTA and ASNA1 mediates their delivery to the endoplasmic reticulum. Client proteins that cannot be properly delivered to the endoplasmic reticulum are ubiquitinated and sorted to the proteasome. Similarly, the BAG6/BAT3 complex also functions as a sorting platform for proteins of the secretory pathway that are mislocalized to the cytosol either delivering them to the proteasome for degradation or to the endoplasmic reticulum. The BAG6/BAT3 complex also plays a role in the endoplasmic reticulum-associated degradation (ERAD), a quality control mechanism that eliminates unwanted proteins of the endoplasmic reticulum through their retrotranslocation to the cytosol and their targeting to the proteasome. It maintains these retrotranslocated proteins in an unfolded yet soluble state condition in the cytosol to ensure their proper delivery to the proteasome. The protein is Ubiquitin-like protein 4A of Homo sapiens (Human).